The sequence spans 188 residues: Elongation factor P (188 aa).

The protein belongs to the elongation factor P family.

It localises to the cytoplasm. It participates in protein biosynthesis; polypeptide chain elongation. Its function is as follows. Involved in peptide bond synthesis. Stimulates efficient translation and peptide-bond synthesis on native or reconstituted 70S ribosomes in vitro. Probably functions indirectly by altering the affinity of the ribosome for aminoacyl-tRNA, thus increasing their reactivity as acceptors for peptidyl transferase. The chain is Elongation factor P from Wolbachia pipientis subsp. Culex pipiens (strain wPip).